The chain runs to 66 residues: MQHELQPDSLVDLKFIMADTGFGKTFIYDRIKSGDLPKAKVIHGRARWLYRDHCEFKNKLLSRANG.

Belongs to the phage alpA excisionase family.

Excisionase and integrase are necessary for the excision of prophage from the host genome by site-specific recombination at the att site. The polypeptide is Probable excisionase hkaC (18) (Shigella flexneri (Shigella flexneri bacteriophage VI)).